The primary structure comprises 308 residues: D-alanine--D-alanine ligase (308 aa).

In terms of domain architecture, ATP-grasp spans 102-302; the sequence is KHVAKAAGIP…FGEFLRWMVE (201 aa). 128–183 is an ATP binding site; it reads PMKPPYVVKPVREGSSFGVVIVKEDQSHPPQVITSSDWRYGDRIMVERYVAGREFT. Asp252, Glu269, and Asn271 together coordinate Mg(2+).

Belongs to the D-alanine--D-alanine ligase family. It depends on Mg(2+) as a cofactor. Requires Mn(2+) as cofactor.

The protein localises to the cytoplasm. The enzyme catalyses 2 D-alanine + ATP = D-alanyl-D-alanine + ADP + phosphate + H(+). The protein operates within cell wall biogenesis; peptidoglycan biosynthesis. In terms of biological role, cell wall formation. In Sinorhizobium medicae (strain WSM419) (Ensifer medicae), this protein is D-alanine--D-alanine ligase.